The primary structure comprises 728 residues: Myb-related protein A (728 aa).

The disordered stretch occupies residues 1–31 (MAGRARSEDEEEDGQFTEHDYDVSLQKGPKK). HTH myb-type domains follow at residues 30–80 (KKPW…HKVL), 81–136 (SPEL…NPDV), and 137–187 (KKSS…KRKV). 3 DNA-binding regions (H-T-H motif) span residues 57 to 80 (WGVV…HKVL), 109 to 132 (WSII…HNHL), and 160 to 183 (WAEI…NSTM). A transcriptional activation domain region spans residues 230–293 (IPRYSSLSHD…RKRVPSGSSL (64 aa)). A negative regulatory domain region spans residues 296–534 (SESYHMGESM…IRRSLMAVTP (239 aa)).

In terms of assembly, component of the DREAM complex.

Its subcellular location is the nucleus. Functionally, transcription factor that specifically recognizes the sequence 5'-YAAC[GT]G-3'. Acts as a master regulator of male meiosis by promoting expression of piRNAs. The piRNA metabolic process mediates the repression of transposable elements during meiosis by forming complexes composed of piRNAs and Piwi proteins and governs the methylation and subsequent repression of transposons, which is essential for the germline integrity. The sequence is that of Myb-related protein A (mybl1) from Xenopus laevis (African clawed frog).